The chain runs to 108 residues: Ribonuclease P protein component 4 (108 aa).

Residues Cys-67, Cys-70, Cys-93, and Cys-96 each coordinate Zn(2+).

It belongs to the eukaryotic/archaeal RNase P protein component 4 family. Consists of a catalytic RNA component and at least 4-5 protein subunits. Requires Zn(2+) as cofactor.

Its subcellular location is the cytoplasm. The enzyme catalyses Endonucleolytic cleavage of RNA, removing 5'-extranucleotides from tRNA precursor.. Functionally, part of ribonuclease P, a protein complex that generates mature tRNA molecules by cleaving their 5'-ends. This Methanococcoides burtonii (strain DSM 6242 / NBRC 107633 / OCM 468 / ACE-M) protein is Ribonuclease P protein component 4.